The chain runs to 651 residues: MLRLQMTDGHISCTAVEFSYMSKISLNTPPGTKVKLSGIVDIKNGFLLLNDSNTTVLGGEVEHLIEKWELQRSLSKHNRSNIGTEGGPPPFVPFGQKCVSHVQVDSRELDRRKTLQVTMPVKPTNDNDEFEKQRTAAIAEVAKSKETKTFGGGGGGARSNLNMNAAGNRNREVLQKEKSTKSEGKHEGVYRELVDEKALKHITEMGFSKEASRQALMDNGNNLEAALNVLLTSNKQKPVMGPPLRGRGKGRGRIRSEDEEDLGNARPSAPSTLFDFLESKMGTLNVEEPKSQPQQLHQGQYRSSNTEQNGVKDNNHLRHPPRNDTRQPRNEKPPRFQRDSQNSKSVLEGSGLPRNRGSERPSTSSVSEVWAEDRIKCDRPYSRYDRTKDTSYPLGSQHSDGAFKKRDNSMQSRSGKGPSFAEAKENPLPQGSVDYNNQKRGKRESQTSIPDYFYDRKSQTINNEAFSGIKIEKHFNVNTDYQNPVRSNSFIGVPNGEVEMPLKGRRIGPIKPAGPVTAVPCDDKIFYNSGPKRRSGPIKPEKILESSIPMEYAKMWKPGDECFALYWEDNKFYRAEVEALHSSGMTAVVKFIDYGNYEEVLLSNIKPIQTEAWEEEGTYDQTLEFRRGGDGQPRRSTRPTQQFYQPPRARN.

A UBA domain is found at 193 to 233 (LVDEKALKHITEMGFSKEASRQALMDNGNNLEAALNVLLTS). Disordered regions lie at residues 234–271 (NKQKPVMGPPLRGRGKGRGRIRSEDEEDLGNARPSAPS), 287–369 (EEPK…VSEV), and 381–450 (YSRY…TSIP). Position 256 is a phosphoserine (S256). Over residues 291–312 (SQPQQLHQGQYRSSNTEQNGVK) the composition is skewed to polar residues. Positions 313–338 (DNNHLRHPPRNDTRQPRNEKPPRFQR) are enriched in basic and acidic residues. Residue S345 is modified to Phosphoserine. Residue K470 forms a Glycyl lysine isopeptide (Lys-Gly) (interchain with G-Cter in SUMO2) linkage. A Tudor domain is found at 555–615 (MWKPGDECFA…KPIQTEAWEE (61 aa)). A compositionally biased stretch (basic and acidic residues) spans 624–633 (EFRRGGDGQP). Residues 624-651 (EFRRGGDGQPRRSTRPTQQFYQPPRARN) form a disordered region. Positions 631–651 (GQPRRSTRPTQQFYQPPRARN) are EBM motif; may mediate interaction with the EJC.

As to quaternary structure, component of mRNA stress granules. Interacts with FMR1, FXR1, FXR2, EWSR1, FUS, SERBP1, EEF1A1 and DDX3X or DDX3Y, and with the small nuclear ribonucleoprotein-associated proteins SNRPB and SNRPN. Interacts with 'Lys-48'-linked tetra-ubiquitin, but not with monoubiquitin or 'Lys-63'-linked ubiquitin chains. May interact with the exon junction complex (EJC) composed at least of CASC3, EIF4A3, MAGOH and RBM8A. Interacts with POLR2A (via the C-terminal domain (CTD)). Post-translationally, probably cleaved by enteroviral 2A proteinase. Detected in heart, brain, placenta, lung, liver, skeletal muscle, kidney and pancreas.

The protein resides in the cytoplasm. Its subcellular location is the nucleus. Its function is as follows. Scaffolding protein that specifically recognizes and binds dimethylarginine-containing proteins. Plays a role in the regulation of translation of target mRNAs by binding Arg/Gly-rich motifs (GAR) in dimethylarginine-containing proteins. In nucleus, acts as a coactivator: recognizes and binds asymmetric dimethylation on the core histone tails associated with transcriptional activation (H3R17me2a and H4R3me2a) and recruits proteins at these arginine-methylated loci. In cytoplasm, acts as an antiviral factor that participates in the assembly of stress granules together with G3BP1. The polypeptide is Tudor domain-containing protein 3 (TDRD3) (Homo sapiens (Human)).